Reading from the N-terminus, the 6713-residue chain is Extracellular matrix-binding protein EbhA (6713 aa).

44 consecutive FIVAR domains span residues 1 to 58 (MGNL…VEQA), 126 to 184 (AMGQ…VTAA), 252 to 310 (AMKG…ITQA), 378 to 436 (QMGN…VEAA), 504 to 562 (AMAN…VENA), 630 to 688 (AMGT…INQI), 756 to 814 (AMGQ…VDRA), 882 to 940 (AMNS…VDNA), 1008 to 1066 (AMGA…INDM), 1134 to 1192 (AMTA…VNSA), 1260 to 1318 (AMKG…ITQA), 1386 to 1444 (AMHS…VEQA), 1512 to 1570 (AMGQ…VERA), 1638 to 1696 (AMTA…VTNA), 1764 to 1822 (AMKG…INQA), 1890 to 1948 (AMTN…VETA), 2142 to 2200 (AMNQ…INQK), 2268 to 2325 (AMGN…VQAA), 2393 to 2451 (AMGQ…VEAA), 2519 to 2577 (AMQR…VEQA), 2645 to 2703 (AMDQ…VTAA), 2771 to 2829 (AMNQ…VTQA), 2897 to 2955 (AMER…VEAA), 3023 to 3081 (AMGN…VEAA), 3149 to 3207 (AMDK…INQA), 3275 to 3333 (AMGN…VEQA), 3401 to 3459 (AMTQ…ITAA), 3527 to 3585 (AMTQ…IQQA), 3653 to 3711 (AMTN…VEQA), 3779 to 3837 (AMTQ…VAQA), 3905 to 3963 (AMGT…VTKA), 4031 to 4089 (AMGN…ITRA), 4157 to 4218 (AMDQ…ITNE), 4283 to 4341 (AMEL…VNGA), 4409 to 4467 (AMGN…VEQA), 4535 to 4592 (AMHG…INQV), 4660 to 4718 (LMDA…VSSA), 4786 to 4844 (AMKA…IDQA), 4912 to 4970 (AMEA…VEQL), 5038 to 5096 (AMQA…VEQL), 5164 to 5222 (AMET…VEQA), 5290 to 5344 (SMDQ…VDQA), 5412 to 5471 (AMDQ…VIKL), and 5666 to 5722 (AMET…INGA). The helical transmembrane segment at 6518-6540 (VIKNAIGVVGISGLLASFWFFIA) threads the bilayer. The tract at residues 6616–6713 (RRKEDEEDVE…KKKKSKKNKK (98 aa)) is disordered. Basic and acidic residues-rich tracts occupy residues 6631–6641 (TDEKVLKDNEH) and 6680–6690 (QKDNQSKDKKS). Over residues 6695–6713 (TSKKVAAKKKKKKSKKNKK) the composition is skewed to basic residues.

The protein resides in the cell membrane. The protein is Extracellular matrix-binding protein EbhA (ebhA) of Staphylococcus aureus (strain Mu3 / ATCC 700698).